The primary structure comprises 409 residues: Multifunctional CCA protein (409 aa).

Positions 8 and 11 each coordinate ATP. Glycine 8 and arginine 11 together coordinate CTP. 2 residues coordinate Mg(2+): aspartate 21 and aspartate 23. Positions 91, 137, and 140 each coordinate ATP. 3 residues coordinate CTP: arginine 91, arginine 137, and arginine 140. In terms of domain architecture, HD spans 228 to 329; the sequence is TGAHTLSVLL…LELLQSFDVF (102 aa).

The protein belongs to the tRNA nucleotidyltransferase/poly(A) polymerase family. Bacterial CCA-adding enzyme type 1 subfamily. In terms of assembly, monomer. Can also form homodimers and oligomers. Mg(2+) is required as a cofactor. Ni(2+) serves as cofactor.

The enzyme catalyses a tRNA precursor + 2 CTP + ATP = a tRNA with a 3' CCA end + 3 diphosphate. It carries out the reaction a tRNA with a 3' CCA end + 2 CTP + ATP = a tRNA with a 3' CCACCA end + 3 diphosphate. Functionally, catalyzes the addition and repair of the essential 3'-terminal CCA sequence in tRNAs without using a nucleic acid template. Adds these three nucleotides in the order of C, C, and A to the tRNA nucleotide-73, using CTP and ATP as substrates and producing inorganic pyrophosphate. tRNA 3'-terminal CCA addition is required both for tRNA processing and repair. Also involved in tRNA surveillance by mediating tandem CCA addition to generate a CCACCA at the 3' terminus of unstable tRNAs. While stable tRNAs receive only 3'-terminal CCA, unstable tRNAs are marked with CCACCA and rapidly degraded. This is Multifunctional CCA protein from Pseudomonas fluorescens (strain ATCC BAA-477 / NRRL B-23932 / Pf-5).